A 399-amino-acid chain; its full sequence is Probable aspartate/prephenate aminotransferase (399 aa).

L-aspartate-binding residues include glycine 39, tryptophan 125, and asparagine 175. Lysine 239 carries the post-translational modification N6-(pyridoxal phosphate)lysine. Residue arginine 375 coordinates L-aspartate.

This sequence belongs to the class-I pyridoxal-phosphate-dependent aminotransferase family. Homodimer. Pyridoxal 5'-phosphate is required as a cofactor.

The protein resides in the cytoplasm. The catalysed reaction is L-aspartate + 2-oxoglutarate = oxaloacetate + L-glutamate. The enzyme catalyses L-arogenate + 2-oxoglutarate = prephenate + L-glutamate. Its function is as follows. Catalyzes the reversible conversion of aspartate and 2-oxoglutarate to glutamate and oxaloacetate. Can also transaminate prephenate in the presence of glutamate. The chain is Probable aspartate/prephenate aminotransferase (aatA) from Rickettsia prowazekii (strain Madrid E).